A 122-amino-acid chain; its full sequence is Large ribosomal subunit protein uL14 (122 aa).

Belongs to the universal ribosomal protein uL14 family. Part of the 50S ribosomal subunit. Forms a cluster with proteins L3 and L19. In the 70S ribosome, L14 and L19 interact and together make contacts with the 16S rRNA in bridges B5 and B8.

In terms of biological role, binds to 23S rRNA. Forms part of two intersubunit bridges in the 70S ribosome. The chain is Large ribosomal subunit protein uL14 from Chelativorans sp. (strain BNC1).